The primary structure comprises 676 residues: DNA ligase (676 aa).

NAD(+)-binding positions include 35–39 (DAVYD), 84–85 (SL), and Glu115. The active-site N6-AMP-lysine intermediate is the Lys117. Positions 138, 177, 296, and 320 each coordinate NAD(+). Zn(2+) contacts are provided by Cys414, Cys417, Cys432, and Cys437. A BRCT domain is found at 599–676 (NANLKLVGKT…SEAELLKILA (78 aa)).

Belongs to the NAD-dependent DNA ligase family. LigA subfamily. Mg(2+) is required as a cofactor. It depends on Mn(2+) as a cofactor.

It catalyses the reaction NAD(+) + (deoxyribonucleotide)n-3'-hydroxyl + 5'-phospho-(deoxyribonucleotide)m = (deoxyribonucleotide)n+m + AMP + beta-nicotinamide D-nucleotide.. In terms of biological role, DNA ligase that catalyzes the formation of phosphodiester linkages between 5'-phosphoryl and 3'-hydroxyl groups in double-stranded DNA using NAD as a coenzyme and as the energy source for the reaction. It is essential for DNA replication and repair of damaged DNA. The sequence is that of DNA ligase from Trichormus variabilis (strain ATCC 29413 / PCC 7937) (Anabaena variabilis).